A 391-amino-acid polypeptide reads, in one-letter code: 5-amino-6-(D-ribitylamino)uracil--L-tyrosine 4-hydroxyphenyl transferase (391 aa).

Positions 55–302 (VTYVINRNIN…GAVARIYLGN (248 aa)) constitute a Radical SAM core domain. [4Fe-4S] cluster-binding residues include C69, C73, and C76.

This sequence belongs to the radical SAM superfamily. CofH family. Consists of two subunits, CofG and CofH. The cofactor is [4Fe-4S] cluster.

It carries out the reaction 5-amino-6-(D-ribitylamino)uracil + L-tyrosine + S-adenosyl-L-methionine = 5-amino-5-(4-hydroxybenzyl)-6-(D-ribitylimino)-5,6-dihydrouracil + 2-iminoacetate + 5'-deoxyadenosine + L-methionine + H(+). It participates in cofactor biosynthesis; coenzyme F0 biosynthesis. Functionally, catalyzes the radical-mediated synthesis of 5-amino-5-(4-hydroxybenzyl)-6-(D-ribitylimino)-5,6-dihydrouracil from 5-amino-6-(D-ribitylamino)uracil and L-tyrosine. In Nostoc sp. (strain PCC 7120 / SAG 25.82 / UTEX 2576), this protein is 5-amino-6-(D-ribitylamino)uracil--L-tyrosine 4-hydroxyphenyl transferase.